Here is a 210-residue protein sequence, read N- to C-terminus: 3-oxo-tetronate 4-phosphate decarboxylase (210 aa).

The active-site Proton acceptor is the glutamate 74. 3 residues coordinate Zn(2+): glutamate 74, histidine 93, and histidine 95. Catalysis depends on tyrosine 120, which acts as the Proton donor. Histidine 160 serves as a coordination point for Zn(2+).

Belongs to the aldolase class II family. AraD/FucA subfamily. Zn(2+) is required as a cofactor.

The catalysed reaction is 3-dehydro-4-O-phospho-D-erythronate + H(+) = dihydroxyacetone phosphate + CO2. It carries out the reaction 3-dehydro-4-O-phospho-L-erythronate + H(+) = dihydroxyacetone phosphate + CO2. In terms of biological role, catalyzes the decarboxylation of 3-oxo-tetronate 4-phosphate to dihydroxyacetone phosphate (DHAP) and CO(2). The polypeptide is 3-oxo-tetronate 4-phosphate decarboxylase (Haemophilus influenzae (strain ATCC 51907 / DSM 11121 / KW20 / Rd)).